Here is a 1102-residue protein sequence, read N- to C-terminus: WD repeat-containing protein 72 (1102 aa).

WD repeat units lie at residues 15–54 (APPHSITAIMITDDQRTIVTGSQEGQLCLWNLSHELKISA), 60–102 (GHSA…CMEK), 160–197 (NCMCIVHSMRIQEDSLLVVSVAGELKVWDLSSSINSIQ), 318–362 (KEQS…VSKF), 402–441 (AGTAVVTSSEYIPSLDKLICGCEDGTIIITQALNAAKARL), 459–504 (GHHQ…ILHK), 507–552 (LEAG…CLLH), and 555–594 (KHLFPVRMIKWHPVENFLIVGCADDSVYIWEIETGTLERH). S1081 and S1083 each carry phosphoserine.

The protein localises to the cytoplasmic vesicle. Plays a major role in formation of tooth enamel. Specifically required during the maturation phase of amelogenesis for normal formation of the enamel matrix and clearance of enamel proteins. May be involved in localization of the calcium transporter SLC24A4 to the ameloblast cell membrane. In Homo sapiens (Human), this protein is WD repeat-containing protein 72 (WDR72).